Consider the following 132-residue polypeptide: Fumarate reductase subunit C (132 aa).

The next 3 helical transmembrane spans lie at 30-50 (ATSVFAVWFCIVLLYGVLCFA), 70-90 (IVVFLNIITLIATLYHTVTYF), and 110-130 (VVRNALWAVTALVSVIALVLV).

Belongs to the FrdC family. Part of an enzyme complex containing four subunits: a flavoprotein (FrdA), an iron-sulfur protein (FrdB), and two hydrophobic anchor proteins (FrdC and FrdD).

It is found in the cell inner membrane. In terms of biological role, anchors the catalytic components of the fumarate reductase complex to the cell membrane, binds quinones. The sequence is that of Fumarate reductase subunit C from Haemophilus influenzae (strain ATCC 51907 / DSM 11121 / KW20 / Rd).